The sequence spans 313 residues: Protein FixB (313 aa).

255–283 (LYLAVGISGQIQHMVGANASQTIFAINKD) contributes to the FAD binding site.

This sequence belongs to the ETF alpha-subunit/FixB family. In terms of assembly, heterodimer of FixA and FixB.

The protein operates within amine and polyamine metabolism; carnitine metabolism. Functionally, required for anaerobic carnitine reduction. May bring reductant to CaiA. The chain is Protein FixB from Shigella dysenteriae serotype 1 (strain Sd197).